A 359-amino-acid polypeptide reads, in one-letter code: Threonine dehydratase biosynthetic, chloroplastic (359 aa).

ACT-like domains are found at residues 184 to 256 (ALLA…NFSH) and 278 to 349 (IFGE…LDNS).

Belongs to the serine/threonine dehydratase family. In terms of assembly, homotetramer. Requires pyridoxal 5'-phosphate as cofactor. In terms of tissue distribution, floral buds of untreated plants. After ABA treatment or mechanical wounding is mostly accumulated in leaves, to a lesser extent in stems, but not in roots. Expressed in anthers, carpel leaves, pith cells, sepals and petals. Not expressed in stomium, vascular bundles, epidermal cells or pollen mother cells.

It localises to the plastid. Its subcellular location is the chloroplast. The enzyme catalyses L-threonine = 2-oxobutanoate + NH4(+). The protein operates within amino-acid biosynthesis; L-isoleucine biosynthesis; 2-oxobutanoate from L-threonine: step 1/1. The chain is Threonine dehydratase biosynthetic, chloroplastic from Solanum tuberosum (Potato).